The chain runs to 126 residues: Phosphoribosyl-AMP cyclohydrolase (126 aa).

A Mg(2+)-binding site is contributed by aspartate 76. Residue cysteine 77 participates in Zn(2+) binding. Mg(2+)-binding residues include aspartate 78 and aspartate 80. Residues cysteine 94 and cysteine 101 each contribute to the Zn(2+) site.

This sequence belongs to the PRA-CH family. In terms of assembly, homodimer. It depends on Mg(2+) as a cofactor. The cofactor is Zn(2+).

It localises to the cytoplasm. It catalyses the reaction 1-(5-phospho-beta-D-ribosyl)-5'-AMP + H2O = 1-(5-phospho-beta-D-ribosyl)-5-[(5-phospho-beta-D-ribosylamino)methylideneamino]imidazole-4-carboxamide. The protein operates within amino-acid biosynthesis; L-histidine biosynthesis; L-histidine from 5-phospho-alpha-D-ribose 1-diphosphate: step 3/9. Functionally, catalyzes the hydrolysis of the adenine ring of phosphoribosyl-AMP. The sequence is that of Phosphoribosyl-AMP cyclohydrolase from Vesicomyosocius okutanii subsp. Calyptogena okutanii (strain HA).